The sequence spans 422 residues: Glycine amidinotransferase, mitochondrial (422 aa).

The N-terminal 37 residues, 1-37 (MLRVRCLRGGSRGAEAAHFIGSRLGRAFTGWVQRSLQ), are a transit peptide targeting the mitochondrion. Residues aspartate 253 and histidine 302 contribute to the active site. Catalysis depends on cysteine 406, which acts as the Amidino-cysteine intermediate. A Phosphothreonine modification is found at threonine 416.

Belongs to the amidinotransferase family. As to quaternary structure, homodimer.

It is found in the mitochondrion inner membrane. The catalysed reaction is L-arginine + glycine = guanidinoacetate + L-ornithine. Its pathway is amine and polyamine biosynthesis; creatine biosynthesis; creatine from L-arginine and glycine: step 1/2. Catalyzes the biosynthesis of guanidinoacetate, the immediate precursor of creatine. Creatine plays a vital role in energy metabolism in muscle tissues. May play a role in embryonic and central nervous system development. The polypeptide is Glycine amidinotransferase, mitochondrial (Gallus gallus (Chicken)).